A 588-amino-acid polypeptide reads, in one-letter code: Histone-arginine methyltransferase CARM1 (588 aa).

An SAM-dependent MTase PRMT-type domain is found at Ala120–Val427. S-adenosyl-L-methionine contacts are provided by Gln133, Arg142, Gly166, Glu188, Glu217, and Ser245. The tract at residues Thr473 to Ser588 is transactivation domain.

It belongs to the class I-like SAM-binding methyltransferase superfamily. Protein arginine N-methyltransferase family. In terms of assembly, homodimer.

It localises to the nucleus. It is found in the cytoplasm. The protein localises to the chromosome. It catalyses the reaction L-arginyl-[protein] + 2 S-adenosyl-L-methionine = N(omega),N(omega)-dimethyl-L-arginyl-[protein] + 2 S-adenosyl-L-homocysteine + 2 H(+). In terms of biological role, methylates (mono- and asymmetric dimethylation) the guanidino nitrogens of arginyl residues in several proteins involved in DNA packaging, transcription regulation, pre-mRNA splicing, and mRNA stability. Recruited to promoters upon gene activation together with histone acetyltransferases from EP300/P300 and p160 families, methylates histone H3 at 'Arg-17' (H3R17me) and activates transcription via chromatin remodeling. In Danio rerio (Zebrafish), this protein is Histone-arginine methyltransferase CARM1 (carm1).